Reading from the N-terminus, the 402-residue chain is Putative F-box/kelch-repeat protein At1g61540 (402 aa).

The 47-residue stretch at 24–70 (PISIMSLPYDLLLNCFSLVSRLYYPTLSLVSKTFRSIITSRELYEIR) folds into the F-box domain. Kelch repeat units follow at residues 135–189 (NIYK…CEVD), 191–240 (KIYI…EVKS), and 246–293 (KIYM…VVDN).

The sequence is that of Putative F-box/kelch-repeat protein At1g61540 from Arabidopsis thaliana (Mouse-ear cress).